The sequence spans 249 residues: Photosystem I-associated linker protein CpcL (249 aa).

Residues 11 to 189 (VSQNQRVTNY…PRYGADHREK (179 aa)) form the PBS-linker domain. Residues 223 to 247 (VVLYVGGALVSLGIIAVALSAWGII) traverse the membrane as a helical segment.

This sequence belongs to the phycobilisome linker protein family. As to quaternary structure, part of a specialized phycobilisome (PBS), a structure that is usually composed of two distinct substructures: a core complex and a number of rods radiating from the core. This protein is part of a core-less PBS rod (called CpcL-PBS) with on average 5 stacked phycocyanin hexamers (PC, CpcA and CpcB). Linker CpcL connects the PC stack to the thylakoid, the hexamers are linked by 1 copy of CpcC1, 3 copies of CpcC2 and the stack is terminated by a single copy of CpcD. Ferredoxin--NADP reductase (petH) is also part of the complex. CpcL-PBS has no central core proteins (allophycocyanin ApcA, ApcB) nor phycobiliprotein ApcE.

It is found in the cellular thylakoid membrane. In terms of biological role, rod linker protein, associated with phycocyanin. Linker polypeptides determine the state of aggregation and the location of the disk-shaped phycobiliprotein units within the phycobilisome and modulate their spectroscopic properties in order to mediate a directed and optimal energy transfer. Plays a role in energy transfer from the phycobilisome to photosystem I (PSI). Although able to transfer energy to both photosystems, this is predominantly a PSI antenna. In Synechocystis sp. (strain ATCC 27184 / PCC 6803 / Kazusa), this protein is Photosystem I-associated linker protein CpcL.